Reading from the N-terminus, the 185-residue chain is Peptidyl-tRNA hydrolase (185 aa).

Tyrosine 14 serves as a coordination point for tRNA. The active-site Proton acceptor is histidine 19. TRNA contacts are provided by phenylalanine 64, asparagine 66, and asparagine 112.

The protein belongs to the PTH family. In terms of assembly, monomer.

The protein localises to the cytoplasm. It carries out the reaction an N-acyl-L-alpha-aminoacyl-tRNA + H2O = an N-acyl-L-amino acid + a tRNA + H(+). Its function is as follows. Hydrolyzes ribosome-free peptidyl-tRNAs (with 1 or more amino acids incorporated), which drop off the ribosome during protein synthesis, or as a result of ribosome stalling. Catalyzes the release of premature peptidyl moieties from peptidyl-tRNA molecules trapped in stalled 50S ribosomal subunits, and thus maintains levels of free tRNAs and 50S ribosomes. The protein is Peptidyl-tRNA hydrolase of Caldanaerobacter subterraneus subsp. tengcongensis (strain DSM 15242 / JCM 11007 / NBRC 100824 / MB4) (Thermoanaerobacter tengcongensis).